A 307-amino-acid polypeptide reads, in one-letter code: uncharacterized protein (307 aa).

The helical transmembrane segment at 12–34 (LLAFLLALIMIGSVFAYMLSGGS) threads the bilayer.

The protein resides in the membrane. This is an uncharacterized protein from Archaeoglobus fulgidus (strain ATCC 49558 / DSM 4304 / JCM 9628 / NBRC 100126 / VC-16).